The sequence spans 750 residues: MTIRSPEPEVKIAVERDPVKTSFEKWAQPGHFSRTLAKGPSTTTWIWNLHADAHDFDSHTNDLEEISRKVFSAHFGQLAIIFIWLSGMYFHGARFSNHEAWLSDPTHVKPSAQVVWPIVGQEILNGDVGGGFQGIQITSGFFQIWRASGITSELQLYSTAIGGLIFAALMLFAGWFHYHKAAPKLTWFQDVESMLNHHLAGLLGLGSLSWAGHQVHVSLPINQLLDAGVDAKEIPLPHEFILNRDLMTQLYPSFAKGLTPFFTLNWSEYSDFSTFRGGLNPVTGGLWLTDTVHHHLAIAVLFLIAGHMYRTNWGIGHSLKEILEAHKGPFTGEGHKGLYEIFTTSWHAQLALNLAMLGSLTIVVAHHMYSMPPYPYLATDYGTQLSLFTHHMWIGGFLVVGAAAHAAIFMVRDYDPTTQYNNLLDRVLRHRDAIVSHLNWACIFLGFHSFGLYIHNDTMSALGRPQDMFSDTAIQLQPIFAQWVQNTHAVAPFSTAPNAAASTSLTWGGIDLVAVGGKVALLPIPLGTADFLVHHIHAFTIHVTVLILLKGVLFARSSRLIPDKANLGFRFPCDGPGRGGTCQVSAWDHVFLGLFWMYNAISVVIFHFSWKMQSDVWGSVSDQKIVTHITGGNFAQSSITINGWLRDFLWAQASQVIQSHGSSLSAYGLPFLGAHFVWAFSLMFLFSGRGYWQELIESIVWAHNKLKVAPAIQPRALSIVQGRAVGVAHYLLGGIATTWAFFLARIIAVG.

8 consecutive transmembrane segments (helical) span residues 70–93 (VFSAHFGQLAIIFIWLSGMYFHGA), 156–179 (LYSTAIGGLIFAALMLFAGWFHYH), 195–219 (LNHHLAGLLGLGSLSWAGHQVHVSL), 291–309 (TVHHHLAIAVLFLIAGHMY), 346–369 (WHAQLALNLAMLGSLTIVVAHHMY), 385–411 (LSLFTHHMWIGGFLVVGAAAHAAIFMV), 433–455 (AIVSHLNWACIFLGFHSFGLYIH), and 531–549 (FLVHHIHAFTIHVTVLILL). Cys573 and Cys582 together coordinate [4Fe-4S] cluster. 2 consecutive transmembrane segments (helical) span residues 589–610 (HVFLGLFWMYNAISVVIFHFSW) and 664–686 (LSAYGLPFLGAHFVWAFSLMFLF). His675 lines the chlorophyll a' pocket. Chlorophyll a contacts are provided by Met683 and Tyr691. Trp692 contributes to the phylloquinone binding site. The chain crosses the membrane as a helical span at residues 724 to 744 (AVGVAHYLLGGIATTWAFFLA).

Belongs to the PsaA/PsaB family. In terms of assembly, the PsaA/B heterodimer binds the P700 chlorophyll special pair and subsequent electron acceptors. PSI consists of a core antenna complex that captures photons, and an electron transfer chain that converts photonic excitation into a charge separation. The eukaryotic PSI reaction center is composed of at least 11 subunits. P700 is a chlorophyll a/chlorophyll a' dimer, A0 is one or more chlorophyll a, A1 is one or both phylloquinones and FX is a shared 4Fe-4S iron-sulfur center. is required as a cofactor.

It localises to the plastid. Its subcellular location is the chloroplast thylakoid membrane. It catalyses the reaction reduced [plastocyanin] + hnu + oxidized [2Fe-2S]-[ferredoxin] = oxidized [plastocyanin] + reduced [2Fe-2S]-[ferredoxin]. Functionally, psaA and PsaB bind P700, the primary electron donor of photosystem I (PSI), as well as the electron acceptors A0, A1 and FX. PSI is a plastocyanin-ferredoxin oxidoreductase, converting photonic excitation into a charge separation, which transfers an electron from the donor P700 chlorophyll pair to the spectroscopically characterized acceptors A0, A1, FX, FA and FB in turn. Oxidized P700 is reduced on the lumenal side of the thylakoid membrane by plastocyanin. This Huperzia lucidula (Shining clubmoss) protein is Photosystem I P700 chlorophyll a apoprotein A1.